The primary structure comprises 88 residues: Small ribosomal subunit protein uS15 (88 aa).

It belongs to the universal ribosomal protein uS15 family. As to quaternary structure, part of the 30S ribosomal subunit. Forms a bridge to the 50S subunit in the 70S ribosome, contacting the 23S rRNA.

Functionally, one of the primary rRNA binding proteins, it binds directly to 16S rRNA where it helps nucleate assembly of the platform of the 30S subunit by binding and bridging several RNA helices of the 16S rRNA. Its function is as follows. Forms an intersubunit bridge (bridge B4) with the 23S rRNA of the 50S subunit in the ribosome. This Thermoanaerobacter pseudethanolicus (strain ATCC 33223 / 39E) (Clostridium thermohydrosulfuricum) protein is Small ribosomal subunit protein uS15.